We begin with the raw amino-acid sequence, 253 residues long: Vitamin B12 import ATP-binding protein BtuD (253 aa).

One can recognise an ABC transporter domain in the interval 3 to 237 (LDAKNLAMPP…EQLESTFATQ (235 aa)). 31–38 (GPNGSGKS) contacts ATP.

The protein belongs to the ABC transporter superfamily. Vitamin B12 importer (TC 3.A.1.13.1) family. In terms of assembly, the complex is composed of two ATP-binding proteins (BtuD), two transmembrane proteins (BtuC) and a solute-binding protein (BtuF).

The protein localises to the cell inner membrane. It carries out the reaction an R-cob(III)alamin(out) + ATP + H2O = an R-cob(III)alamin(in) + ADP + phosphate + H(+). Its function is as follows. Part of the ABC transporter complex BtuCDF involved in vitamin B12 import. Responsible for energy coupling to the transport system. In Photobacterium profundum (strain SS9), this protein is Vitamin B12 import ATP-binding protein BtuD.